We begin with the raw amino-acid sequence, 388 residues long: LL-diaminopimelate aminotransferase (388 aa).

Y16 and G41 together coordinate substrate. Pyridoxal 5'-phosphate contacts are provided by residues Y70, 104-105 (SK), Y129, N179, Y210, and 239-241 (SLS). 3 residues coordinate substrate: K105, Y129, and N179. K242 carries the post-translational modification N6-(pyridoxal phosphate)lysine. Residue R250 coordinates pyridoxal 5'-phosphate. R368 is a substrate binding site.

Belongs to the class-I pyridoxal-phosphate-dependent aminotransferase family. LL-diaminopimelate aminotransferase subfamily. As to quaternary structure, homodimer. Requires pyridoxal 5'-phosphate as cofactor.

It catalyses the reaction (2S,6S)-2,6-diaminopimelate + 2-oxoglutarate = (S)-2,3,4,5-tetrahydrodipicolinate + L-glutamate + H2O + H(+). The protein operates within amino-acid biosynthesis; L-lysine biosynthesis via DAP pathway; LL-2,6-diaminopimelate from (S)-tetrahydrodipicolinate (aminotransferase route): step 1/1. Involved in the synthesis of meso-diaminopimelate (m-DAP or DL-DAP), required for both lysine and peptidoglycan biosynthesis. Catalyzes the direct conversion of tetrahydrodipicolinate to LL-diaminopimelate. In Nitratidesulfovibrio vulgaris (strain DP4) (Desulfovibrio vulgaris), this protein is LL-diaminopimelate aminotransferase.